The primary structure comprises 307 residues: UDP-3-O-acyl-N-acetylglucosamine deacetylase (307 aa).

His-80, His-239, and Asp-243 together coordinate Zn(2+). Residue His-266 is the Proton donor of the active site.

This sequence belongs to the LpxC family. Requires Zn(2+) as cofactor.

The enzyme catalyses a UDP-3-O-[(3R)-3-hydroxyacyl]-N-acetyl-alpha-D-glucosamine + H2O = a UDP-3-O-[(3R)-3-hydroxyacyl]-alpha-D-glucosamine + acetate. It functions in the pathway glycolipid biosynthesis; lipid IV(A) biosynthesis; lipid IV(A) from (3R)-3-hydroxytetradecanoyl-[acyl-carrier-protein] and UDP-N-acetyl-alpha-D-glucosamine: step 2/6. In terms of biological role, catalyzes the hydrolysis of UDP-3-O-myristoyl-N-acetylglucosamine to form UDP-3-O-myristoylglucosamine and acetate, the committed step in lipid A biosynthesis. The sequence is that of UDP-3-O-acyl-N-acetylglucosamine deacetylase from Neisseria gonorrhoeae (strain ATCC 700825 / FA 1090).